Consider the following 286-residue polypeptide: Pantothenate synthetase (286 aa).

Residue 30-37 (MGNLHAGH) coordinates ATP. His37 acts as the Proton donor in catalysis. Gln61 is a (R)-pantoate binding site. Position 61 (Gln61) interacts with beta-alanine. An ATP-binding site is contributed by 149 to 152 (GEKD). Gln155 is a (R)-pantoate binding site. ATP contacts are provided by residues Val178 and 186-189 (MSSR).

It belongs to the pantothenate synthetase family. As to quaternary structure, homodimer.

It localises to the cytoplasm. It carries out the reaction (R)-pantoate + beta-alanine + ATP = (R)-pantothenate + AMP + diphosphate + H(+). It functions in the pathway cofactor biosynthesis; (R)-pantothenate biosynthesis; (R)-pantothenate from (R)-pantoate and beta-alanine: step 1/1. In terms of biological role, catalyzes the condensation of pantoate with beta-alanine in an ATP-dependent reaction via a pantoyl-adenylate intermediate. The sequence is that of Pantothenate synthetase from Methylococcus capsulatus (strain ATCC 33009 / NCIMB 11132 / Bath).